The primary structure comprises 113 residues: Large ribosomal subunit protein uL22 (113 aa).

Belongs to the universal ribosomal protein uL22 family. In terms of assembly, part of the 50S ribosomal subunit.

Its function is as follows. This protein binds specifically to 23S rRNA; its binding is stimulated by other ribosomal proteins, e.g. L4, L17, and L20. It is important during the early stages of 50S assembly. It makes multiple contacts with different domains of the 23S rRNA in the assembled 50S subunit and ribosome. In terms of biological role, the globular domain of the protein is located near the polypeptide exit tunnel on the outside of the subunit, while an extended beta-hairpin is found that lines the wall of the exit tunnel in the center of the 70S ribosome. This chain is Large ribosomal subunit protein uL22, found in Roseiflexus castenholzii (strain DSM 13941 / HLO8).